A 916-amino-acid chain; its full sequence is Nitrate reductase [NADH] 1 (916 aa).

Residues 1–77 (MAASVQPRQF…DDEEEEQEDW (77 aa)) are disordered. Residues 66 to 76 (GSDDEEEEQED) show a composition bias toward acidic residues. A Mo-molybdopterin-binding site is contributed by Cys192. The 76-residue stretch at 541-616 (GKQFTMSEVR…LDTYRIGELI (76 aa)) folds into the Cytochrome b5 heme-binding domain. Residues His576 and His599 each contribute to the heme site. Residues 656 to 768 (RDKVPCQLVD…KGPLGHVEYT (113 aa)) enclose the FAD-binding FR-type domain. FAD contacts are provided by residues 708–711 (RAYT), 725–729 (LIKVY), Phe730, Phe737, 742–744 (LMT), Ser792, and Thr795.

This sequence belongs to the nitrate reductase family. In terms of assembly, homodimer. FAD is required as a cofactor. Heme serves as cofactor. Requires Mo-molybdopterin as cofactor.

The enzyme catalyses nitrite + NAD(+) + H2O = nitrate + NADH + H(+). In terms of biological role, nitrate reductase is a key enzyme involved in the first step of nitrate assimilation in plants, fungi and bacteria. This chain is Nitrate reductase [NADH] 1 (NIA1), found in Oryza sativa subsp. japonica (Rice).